Consider the following 348-residue polypeptide: Anthranilate phosphoribosyltransferase (348 aa).

5-phospho-alpha-D-ribose 1-diphosphate is bound by residues Gly-83, 86-87, Thr-91, 93-96, 111-119, and Thr-123; these read GD, NVST, and KHGNRAASS. Gly-83 provides a ligand contact to anthranilate. Ser-95 lines the Mg(2+) pocket. Asn-114 is an anthranilate binding site. Arg-169 contacts anthranilate. Residues Asp-227 and Glu-228 each contribute to the Mg(2+) site.

It belongs to the anthranilate phosphoribosyltransferase family. As to quaternary structure, homodimer. The cofactor is Mg(2+).

It catalyses the reaction N-(5-phospho-beta-D-ribosyl)anthranilate + diphosphate = 5-phospho-alpha-D-ribose 1-diphosphate + anthranilate. It functions in the pathway amino-acid biosynthesis; L-tryptophan biosynthesis; L-tryptophan from chorismate: step 2/5. Catalyzes the transfer of the phosphoribosyl group of 5-phosphorylribose-1-pyrophosphate (PRPP) to anthranilate to yield N-(5'-phosphoribosyl)-anthranilate (PRA). This is Anthranilate phosphoribosyltransferase from Thermobifida fusca (strain YX).